The chain runs to 354 residues: Uroporphyrinogen decarboxylase (354 aa).

Substrate contacts are provided by residues R27–R31, D77, Y154, T209, and H327.

The protein belongs to the uroporphyrinogen decarboxylase family. Homodimer.

The protein localises to the cytoplasm. It carries out the reaction uroporphyrinogen III + 4 H(+) = coproporphyrinogen III + 4 CO2. The protein operates within porphyrin-containing compound metabolism; protoporphyrin-IX biosynthesis; coproporphyrinogen-III from 5-aminolevulinate: step 4/4. In terms of biological role, catalyzes the decarboxylation of four acetate groups of uroporphyrinogen-III to yield coproporphyrinogen-III. This chain is Uroporphyrinogen decarboxylase, found in Edwardsiella ictaluri (strain 93-146).